We begin with the raw amino-acid sequence, 73 residues long: Metallothionein (73 aa).

Residues Cys15, Cys20, Cys26, Cys28, Cys32, Cys34, Cys39, Cys46, Cys48, Cys52, Cys54, Cys58, Cys64, Cys66, Cys70, and Cys72 each contribute to the Cd(2+) site.

Belongs to the metallothionein superfamily. Type 2 family.

Functionally, the metallothioneins are involved in the cellular sequestration of toxic metal ions. The polypeptide is Metallothionein (Dreissena polymorpha (Zebra mussel)).